The sequence spans 237 residues: Bax inhibitor 1 (237 aa).

Topologically, residues 1–29 (MNIFDRKINFDALLKFSHITPSTQQHLKK) are cytoplasmic. Residue Lys7 forms a Glycyl lysine isopeptide (Lys-Gly) (interchain with G-Cter in ubiquitin) linkage. Residues 30–50 (VYASFALCMFVAAAGAYVHMV) form a helical membrane-spanning segment. At 51 to 52 (TH) the chain is on the lumenal side. Residues 53 to 73 (FIQAGLLSALGSLILMIWLMA) traverse the membrane as a helical segment. Residues 74-86 (TPHSHETEQKRLG) lie on the Cytoplasmic side of the membrane. The chain crosses the membrane as a helical span at residues 87-107 (LLAGFAFLTGVGLGPALEFCI). Residues 108-112 (AVNPS) lie on the Lumenal side of the membrane. The helical transmembrane segment at 113-133 (ILPTAFMGTAMIFTCFTLSAL) threads the bilayer. The Cytoplasmic segment spans residues 134–139 (YARRRS). A helical transmembrane segment spans residues 140-160 (YLFLGGILMSALSLLLLSSLG). At 161 to 166 (NVFFGS) the chain is on the lumenal side. A helical membrane pass occupies residues 167–187 (IWLFQANLYVGLVVMCGFVLF). The Cytoplasmic segment spans residues 188-206 (DTQLIIEKAEHGDQDYIWH). The segment at residues 207-227 (CIDLFLDFITVFRKLMMILAM) is an intramembrane region (helical). Residues 228–237 (NEKDKKKEKK) are Cytoplasmic-facing.

Belongs to the BI1 family. As to quaternary structure, interacts with BCL2 and BCL2L1. Interacts with ERN1. Ubiquitinated by BFAR, leading to proteasomal degradation. In terms of tissue distribution, highly abundant in testis.

Its subcellular location is the endoplasmic reticulum membrane. Endoplasmic reticulum (ER)-resident protein that confers cellular protection as an anti-apoptotic protein by limiting multiple stress-inducing pathways surrounding the endoplasmic reticulum and mitochondria. Inhibits the activities of the key sensor for the endoplasmic reticulum unfolded protein response IRE1alpha/ERN1 both directly and by blocking BAX/BAK binding. Modulates ER calcium homeostasis by acting as a calcium-leak channel. Negatively regulates autophagy and autophagosome formation, especially during periods of nutrient deprivation, and reduces cell survival during starvation. In Homo sapiens (Human), this protein is Bax inhibitor 1 (TMBIM6).